The primary structure comprises 358 residues: Aminomethyltransferase (358 aa).

It belongs to the GcvT family. As to quaternary structure, the glycine cleavage system is composed of four proteins: P, T, L and H.

It catalyses the reaction N(6)-[(R)-S(8)-aminomethyldihydrolipoyl]-L-lysyl-[protein] + (6S)-5,6,7,8-tetrahydrofolate = N(6)-[(R)-dihydrolipoyl]-L-lysyl-[protein] + (6R)-5,10-methylene-5,6,7,8-tetrahydrofolate + NH4(+). Functionally, the glycine cleavage system catalyzes the degradation of glycine. The sequence is that of Aminomethyltransferase from Francisella tularensis subsp. tularensis (strain FSC 198).